Consider the following 236-residue polypeptide: Biosynthetic peptidoglycan transglycosylase (236 aa).

The chain crosses the membrane as a helical span at residues Ala-12 to Pro-31.

It belongs to the glycosyltransferase 51 family.

It localises to the cell inner membrane. It catalyses the reaction [GlcNAc-(1-&gt;4)-Mur2Ac(oyl-L-Ala-gamma-D-Glu-L-Lys-D-Ala-D-Ala)](n)-di-trans,octa-cis-undecaprenyl diphosphate + beta-D-GlcNAc-(1-&gt;4)-Mur2Ac(oyl-L-Ala-gamma-D-Glu-L-Lys-D-Ala-D-Ala)-di-trans,octa-cis-undecaprenyl diphosphate = [GlcNAc-(1-&gt;4)-Mur2Ac(oyl-L-Ala-gamma-D-Glu-L-Lys-D-Ala-D-Ala)](n+1)-di-trans,octa-cis-undecaprenyl diphosphate + di-trans,octa-cis-undecaprenyl diphosphate + H(+). It participates in cell wall biogenesis; peptidoglycan biosynthesis. Its function is as follows. Peptidoglycan polymerase that catalyzes glycan chain elongation from lipid-linked precursors. The polypeptide is Biosynthetic peptidoglycan transglycosylase (Pseudomonas putida (strain GB-1)).